The sequence spans 205 residues: MSTQYIDETAFVQAEQGKTNLMFSDEKQQARFELGVSMVIYKWDALDVAVENSWGGPDSAEKRDWITGIVVDLFKNEKVVDAALIEETLLYAMIDEFETNVEDDSALPIAVEVINIYNDCFNLNYNKVEKLYLEWQEKQRTKKSKRVVHIEGDDDEDDEDVEDYDDEDEDEEMDEVVPDLVSSKPEPIVDEDGFELVQPKGRRKH.

The segment at 144–205 is disordered; the sequence is SKRVVHIEGD…LVQPKGRRKH (62 aa). The span at 152–177 shows a compositional bias: acidic residues; sequence GDDDEDDEDVEDYDDEDEDEEMDEVV.

Belongs to the TSR2 family. In terms of assembly, interacts with RPS26A.

Its subcellular location is the cytoplasm. The protein resides in the nucleus. Functionally, required for 20S pre-rRNA processing. The sequence is that of Pre-rRNA-processing protein TSR2 from Saccharomyces cerevisiae (strain ATCC 204508 / S288c) (Baker's yeast).